We begin with the raw amino-acid sequence, 761 residues long: Hyperosmolality-gated Ca2+ permeable channel 1.6 (761 aa).

Transmembrane regions (helical) follow at residues 7-27, 101-121, 156-176, 375-395, 419-439, 467-487, 512-532, 583-603, 630-650, and 653-673; these read IGVA…AFAI, IYLL…TTMV, PRFW…CFIL, LIVG…IAFV, LLKS…FLLF, FYMF…TAFQ, ATFF…GEIL, AAVS…AFVV, VVTA…TKHA, and STPL…HCKN. Residues 718 to 731 show a composition bias toward basic and acidic residues; the sequence is RVGEDPEPEEKLES. The segment at 718–761 is disordered; sequence RVGEDPEPEEKLESDMSPPDLVATKRWSWRNTPLPSKDSCREIP.

It belongs to the CSC1 (TC 1.A.17) family.

It localises to the membrane. In terms of biological role, acts as an osmosensitive calcium-permeable cation channel. The sequence is that of Hyperosmolality-gated Ca2+ permeable channel 1.6 from Arabidopsis thaliana (Mouse-ear cress).